A 492-amino-acid chain; its full sequence is Coagulation factor X (492 aa).

The signal sequence occupies residues 1–23; the sequence is MAGLLHLVLLSTALGGLLRPAGS. Residues 24–40 constitute a propeptide that is removed on maturation; the sequence is VFLPRDQAHRVLQRARR. Residues 41–85 enclose the Gla domain; that stretch reads ANSFLEEVKQGNLERECLEEACSLEEAREVFEDAEQTDEFWSKYK. A 4-carboxyglutamate mark is found at E46, E47, E54, E56, E59, E60, E65, E66, E69, E72, E75, and E79. A disulfide bridge links C57 with C62. The region spanning 86–122 is the EGF-like 1; calcium-binding domain; that stretch reads DGDQCEGHPCLNQGHCKDGIGDYTCTCAEGFEGKNCE. 11 disulfide bridges follow: C90–C101, C95–C110, C112–C121, C129–C140, C136–C149, C151–C164, C172–C341, C240–C245, C260–C276, C389–C403, and C414–C442. D103 is subject to (3R)-3-hydroxyaspartate. Residues 125 to 165 enclose the EGF-like 2 domain; it reads TREICSLDNGGCDQFCREERSEVRCSCAHGYVLGDDSKSCV. Residues 183–233 constitute a propeptide, activation peptide; sequence WAIHTSEDALDASELEHYDPADLSPTESSLDLLGLNRTEPSAGEDGSQVVR. Y200 bears the Sulfotyrosine mark. O-linked (GalNAc...) threonine glycosylation occurs at T208. N218 is a glycosylation site (N-linked (GlcNAc...) asparagine). Residues 234–466 enclose the Peptidase S1 domain; it reads IVGGRDCAEG…FLKWIDKIMK (233 aa). Active-site charge relay system residues include H275 and D321. S418 functions as the Charge relay system in the catalytic mechanism. The segment at 472 to 492 is disordered; the sequence is AGSRGHSEAPATWTVPPPLPL. A propeptide spans 476 to 492 (may be removed but is not necessary for activation); sequence GHSEAPATWTVPPPLPL. A glycan (O-linked (GalNAc...) threonine) is linked at T485.

This sequence belongs to the peptidase S1 family. The two chains are formed from a single-chain precursor by the excision of two Arg residues and are held together by 1 or more disulfide bonds. Forms a heterodimer with SERPINA5. Interacts (activated) with guianensin, an anticoagulant protein from Simulium guianense saliva. Interacts (activated) with simukunin, an anticoagulant protein from Simulium vittatum saliva. Post-translationally, the vitamin K-dependent, enzymatic carboxylation of some glutamate residues allows the modified protein to bind calcium. In terms of processing, N- and O-glycosylated. Proteolytically cleaved and activated by cathepsin CTSG. The activation peptide is cleaved by factor IXa (in the intrinsic pathway), or by factor VIIa (in the extrinsic pathway). Post-translationally, the iron and 2-oxoglutarate dependent 3-hydroxylation of aspartate and asparagine is (R) stereospecific within EGF domains.

It localises to the secreted. It carries out the reaction Selective cleavage of Arg-|-Thr and then Arg-|-Ile bonds in prothrombin to form thrombin.. With respect to regulation, inhibited by SERPINA5. Functionally, factor Xa is a vitamin K-dependent glycoprotein that converts prothrombin to thrombin in the presence of factor Va, calcium and phospholipid during blood clotting. Factor Xa activates pro-inflammatory and pro-fibrotic signaling pathways in a protease-activated receptor (PAR)-dependent manner. This Bos taurus (Bovine) protein is Coagulation factor X (F10).